The sequence spans 257 residues: AA9 family lytic polysaccharide monooxygenase U (257 aa).

The N-terminal stretch at 1–19 (MKLYLAAFLGAVATPGAFA) is a signal peptide. Histidine 20 contributes to the Cu(2+) binding site. Residues asparagine 29 and asparagine 71 are each glycosylated (N-linked (GlcNAc...) asparagine). The cysteines at positions 74 and 194 are disulfide-linked. Histidine 113 serves as a coordination point for Cu(2+). An N-linked (GlcNAc...) asparagine glycan is attached at asparagine 161. Glutamine 189 is an O2 binding site. Tyrosine 191 is a Cu(2+) binding site.

This sequence belongs to the polysaccharide monooxygenase AA9 family. Requires Cu(2+) as cofactor.

Its subcellular location is the secreted. The enzyme catalyses [(1-&gt;4)-beta-D-glucosyl]n+m + reduced acceptor + O2 = 4-dehydro-beta-D-glucosyl-[(1-&gt;4)-beta-D-glucosyl]n-1 + [(1-&gt;4)-beta-D-glucosyl]m + acceptor + H2O.. Its function is as follows. Lytic polysaccharide monooxygenase (LPMO) that depolymerizes crystalline and amorphous polysaccharides via the oxidation of scissile alpha- or beta-(1-4)-glycosidic bonds, yielding C1 and C4 oxidation products. Catalysis by LPMOs requires the reduction of the active-site copper from Cu(II) to Cu(I) by a reducing agent and H(2)O(2) or O(2) as a cosubstrate. Shows no activity on wheat arabinoxylan, konjac glucomannan, acetylated spruce galactoglucomannan, or cellopentaose. This chain is AA9 family lytic polysaccharide monooxygenase U, found in Thermothielavioides terrestris (strain ATCC 38088 / NRRL 8126) (Thielavia terrestris).